The chain runs to 119 residues: Large ribosomal subunit protein bL20 (119 aa).

This sequence belongs to the bacterial ribosomal protein bL20 family.

Binds directly to 23S ribosomal RNA and is necessary for the in vitro assembly process of the 50S ribosomal subunit. It is not involved in the protein synthesizing functions of that subunit. This is Large ribosomal subunit protein bL20 from Nitrosococcus oceani (strain ATCC 19707 / BCRC 17464 / JCM 30415 / NCIMB 11848 / C-107).